We begin with the raw amino-acid sequence, 388 residues long: Processive diacylglycerol beta-glucosyltransferase (388 aa).

The protein belongs to the glycosyltransferase 28 family. UgtP subfamily.

The protein resides in the cell membrane. The catalysed reaction is a 1,2-diacyl-3-O-(beta-D-glucopyranosyl)-sn-glycerol + UDP-alpha-D-glucose = a 1,2-diacyl-3-O-(beta-D-Glc-(1-&gt;6)-beta-D-Glc)-sn-glycerol + UDP + H(+). It catalyses the reaction a 1,2-diacyl-3-O-(beta-D-Glc-(1-&gt;6)-beta-D-Glc)-sn-glycerol + UDP-alpha-D-glucose = a 1,2-diacyl-3-O-(beta-D-Glc-(1-&gt;6)-beta-D-Glc-(1-&gt;6)-beta-D-Glc)-sn-glycerol + UDP + H(+). The enzyme catalyses a 1,2-diacyl-sn-glycerol + UDP-alpha-D-glucose = a 1,2-diacyl-3-O-(beta-D-glucopyranosyl)-sn-glycerol + UDP + H(+). It participates in glycolipid metabolism; diglucosyl-diacylglycerol biosynthesis. Functionally, processive glucosyltransferase involved in the biosynthesis of both the bilayer- and non-bilayer-forming membrane glucolipids. Is able to successively transfer up to three glucosyl residues to diacylglycerol (DAG), thereby catalyzing the formation of beta-monoglucosyl-DAG (3-O-(beta-D-glucopyranosyl)-1,2-diacyl-sn-glycerol), beta-diglucosyl-DAG (3-O-(beta-D-glucopyranosyl-beta-(1-&gt;6)-D-glucopyranosyl)-1,2-diacyl-sn-glycerol) and beta-triglucosyl-DAG (3-O-(beta-D-glucopyranosyl-beta-(1-&gt;6)-D-glucopyranosyl-beta-(1-&gt;6)-D-glucopyranosyl)-1,2-diacyl-sn-glycerol). Beta-diglucosyl-DAG is the predominant glycolipid found in Bacillales and is also used as a membrane anchor for lipoteichoic acid (LTA). The sequence is that of Processive diacylglycerol beta-glucosyltransferase from Bacillus mycoides (strain KBAB4) (Bacillus weihenstephanensis).